Reading from the N-terminus, the 200-residue chain is Phospholipase A2 inhibitor gamma subunit B (200 aa).

The signal sequence occupies residues 1-19 (MKFLLFCCLFGTFLATGMC). 8 disulfides stabilise this stretch: Cys-22/Cys-46, Cys-25/Cys-32, Cys-39/Cys-67, Cys-73/Cys-94, Cys-95/Cys-100, Cys-120/Cys-145, Cys-138/Cys-165, and Cys-171/Cys-191.

It belongs to the CNF-like-inhibitor family. In terms of assembly, heteromer composed of subunit A and subunit B.

It localises to the secreted. Inhibits the enzymatic activity of the phospholipase A2 (PLA2). This is Phospholipase A2 inhibitor gamma subunit B from Elaphe climacophora (Japanese rat snake).